The sequence spans 321 residues: Fibronectin type III domain-containing protein 8 (321 aa).

Residues 175–277 (VPEVPFICEH…KPYKFATVST (103 aa)) form the Fibronectin type-III domain.

The polypeptide is Fibronectin type III domain-containing protein 8 (Fndc8) (Mus musculus (Mouse)).